The chain runs to 259 residues: tRNA pseudouridine synthase A (259 aa).

Asp52 functions as the Nucleophile in the catalytic mechanism. Substrate is bound at residue Tyr113.

It belongs to the tRNA pseudouridine synthase TruA family. Homodimer.

It catalyses the reaction uridine(38/39/40) in tRNA = pseudouridine(38/39/40) in tRNA. Its function is as follows. Formation of pseudouridine at positions 38, 39 and 40 in the anticodon stem and loop of transfer RNAs. The polypeptide is tRNA pseudouridine synthase A (Allorhizobium ampelinum (strain ATCC BAA-846 / DSM 112012 / S4) (Agrobacterium vitis (strain S4))).